A 169-amino-acid polypeptide reads, in one-letter code: Disulfide bond formation protein B (169 aa).

The Cytoplasmic portion of the chain corresponds to 1 to 14 (MNNLTLSLRRERRL). The chain crosses the membrane as a helical span at residues 15-31 (LVLLALVCLALLAGALY). The Periplasmic segment spans residues 32–49 (LQYVKNEDPCPLCIIQRY). Cysteines 41 and 44 form a disulfide. The helical transmembrane segment at 50–64 (FFVLIAVFAFIGAGM) threads the bilayer. The Cytoplasmic segment spans residues 65-71 (ASGAGVA). A helical transmembrane segment spans residues 72–89 (VTEALIVLSAAAGVGTAA). Over 90-144 (RHLYVQLNPGFSCGFDALQPVVDSLPPARWLPGVFKVAGLCETVYPPIFGILLPG) the chain is Periplasmic. A disulfide bridge connects residues Cys-102 and Cys-130. A helical membrane pass occupies residues 145-163 (WALIAFVLIAVPVAVSLLR). The Cytoplasmic portion of the chain corresponds to 164–169 (HRGRLR).

Belongs to the DsbB family.

It is found in the cell inner membrane. Required for disulfide bond formation in some periplasmic proteins. Acts by oxidizing the DsbA protein. The chain is Disulfide bond formation protein B from Burkholderia mallei (strain ATCC 23344).